Consider the following 246-residue polypeptide: Probable septum site-determining protein MinC (246 aa).

It belongs to the MinC family. As to quaternary structure, interacts with MinD and FtsZ.

Functionally, cell division inhibitor that blocks the formation of polar Z ring septums. Rapidly oscillates between the poles of the cell to destabilize FtsZ filaments that have formed before they mature into polar Z rings. Prevents FtsZ polymerization. This chain is Probable septum site-determining protein MinC, found in Lachnospira eligens (strain ATCC 27750 / DSM 3376 / VPI C15-48 / C15-B4) (Eubacterium eligens).